The chain runs to 367 residues: Chorismate synthase (367 aa).

Position 48 (arginine 48) interacts with NADP(+). FMN is bound by residues arginine 125–serine 127, asparagine 243–alanine 244, glycine 283, lysine 298–serine 302, and arginine 324.

This sequence belongs to the chorismate synthase family. As to quaternary structure, homotetramer. FMNH2 serves as cofactor.

The enzyme catalyses 5-O-(1-carboxyvinyl)-3-phosphoshikimate = chorismate + phosphate. It participates in metabolic intermediate biosynthesis; chorismate biosynthesis; chorismate from D-erythrose 4-phosphate and phosphoenolpyruvate: step 7/7. Catalyzes the anti-1,4-elimination of the C-3 phosphate and the C-6 proR hydrogen from 5-enolpyruvylshikimate-3-phosphate (EPSP) to yield chorismate, which is the branch point compound that serves as the starting substrate for the three terminal pathways of aromatic amino acid biosynthesis. This reaction introduces a second double bond into the aromatic ring system. This chain is Chorismate synthase, found in Psychrobacter cryohalolentis (strain ATCC BAA-1226 / DSM 17306 / VKM B-2378 / K5).